The following is a 261-amino-acid chain: 14-3-3-like protein GF14-12 (261 aa).

Belongs to the 14-3-3 family.

Its function is as follows. Is associated with a DNA binding complex to bind to the G box, a well-characterized cis-acting DNA regulatory element found in plant genes. This chain is 14-3-3-like protein GF14-12 (GRF2), found in Zea mays (Maize).